The chain runs to 402 residues: Putative polyketide beta-ketoacyl synthase 2 (402 aa).

2 disordered regions span residues 1–30 and 188–222; these read MTPV…WAPR and VEPR…FDRD. The Ketosynthase family 3 (KS3) domain maps to 1–400; the sequence is MTPVAVTGMG…GFNSALVVRA (400 aa). The segment covering 192-205 has biased composition (low complexity); sequence SAPGAGSPSSPAGG.

Belongs to the thiolase-like superfamily. Beta-ketoacyl-ACP synthases family.

It participates in antifungal biosynthesis; monensin biosynthesis. The chain is Putative polyketide beta-ketoacyl synthase 2 from Streptomyces virginiae (Streptomyces cinnamonensis).